We begin with the raw amino-acid sequence, 396 residues long: Phosphoglycerate kinase (396 aa).

Substrate contacts are provided by residues 21–23 (DFN), Arg-36, 59–62 (HLGK), Arg-119, and Arg-156. Residues Lys-206, Glu-325, and 352 to 355 (GGDS) each bind ATP.

The protein belongs to the phosphoglycerate kinase family. Monomer.

The protein resides in the cytoplasm. The catalysed reaction is (2R)-3-phosphoglycerate + ATP = (2R)-3-phospho-glyceroyl phosphate + ADP. The protein operates within carbohydrate degradation; glycolysis; pyruvate from D-glyceraldehyde 3-phosphate: step 2/5. This chain is Phosphoglycerate kinase, found in Staphylococcus saprophyticus subsp. saprophyticus (strain ATCC 15305 / DSM 20229 / NCIMB 8711 / NCTC 7292 / S-41).